Consider the following 168-residue polypeptide: MPRSRINENFIDKTFSIVANILLRIIPTTSGEKRAFTYYRDGMSAQSEGNYAEALQNYYEAMRLEIDPYDRSYILYNIGLIHTSNGEHTKALEYYFRALERNPFLPQAFNNMAVICHYRGEQAIRQGDSEVAESWFNQAAEYWKQAIALTPGNYIAAQNWLKITGRFE.

TPR repeat units follow at residues 35–68, 72–105, and 120–153; these read AFTYYRDGMSAQSEGNYAEALQNYYEAMRLEIDP, SYILYNIGLIHTSNGEHTKALEYYFRALERNPFL, and GEQAIRQGDSEVAESWFNQAAEYWKQAIALTPGN.

It belongs to the Ycf3 family.

It is found in the plastid. The protein localises to the chloroplast thylakoid membrane. In terms of biological role, essential for the assembly of the photosystem I (PSI) complex. May act as a chaperone-like factor to guide the assembly of the PSI subunits. This chain is Photosystem I assembly protein Ycf3, found in Phaseolus vulgaris (Kidney bean).